Reading from the N-terminus, the 405-residue chain is Aspartokinase (405 aa).

Residue Lys7–Gly10 coordinates ATP. Arg25–Arg30 provides a ligand contact to substrate. An ATP-binding site is contributed by Ser41. Residues Thr47–Glu49, Glu74, Leu125–Asp126, Arg150–Ser153, and Ser153 contribute to the substrate site. ATP contacts are provided by residues Thr173–Asp174, Tyr179–His184, and Arg209. ACT domains lie at Ile263–Val342 and Ile344–Ala405. Residues Asp270, Ile274–Ala275, Ala288–Asp290, Gln294, Val355–Pro356, Asn369–Ile370, and Ser376–Glu377 contribute to the substrate site.

Belongs to the aspartokinase family. Heterotetramer consisting of 2 isoforms Alpha (catalytic and regulation) and of a homodimer of 2 isoforms Beta (regulation and thermostability).

The catalysed reaction is L-aspartate + ATP = 4-phospho-L-aspartate + ADP. It participates in amino-acid biosynthesis; L-lysine biosynthesis via DAP pathway; (S)-tetrahydrodipicolinate from L-aspartate: step 1/4. It functions in the pathway amino-acid biosynthesis; L-methionine biosynthesis via de novo pathway; L-homoserine from L-aspartate: step 1/3. Its pathway is amino-acid biosynthesis; L-threonine biosynthesis; L-threonine from L-aspartate: step 1/5. Inhibited by threonine. Functionally, catalyzes the phosphorylation of the beta-carboxyl group of aspartic acid with ATP to yield 4-phospho-L-aspartate, which is involved in the branched biosynthetic pathway leading to the biosynthesis of amino acids threonine, isoleucine and methionine. In Thermus thermophilus, this protein is Aspartokinase (ask).